Here is a 138-residue protein sequence, read N- to C-terminus: UPF0251 protein Dole_1957 (138 aa).

The protein belongs to the UPF0251 family.

This chain is UPF0251 protein Dole_1957, found in Desulfosudis oleivorans (strain DSM 6200 / JCM 39069 / Hxd3) (Desulfococcus oleovorans).